We begin with the raw amino-acid sequence, 274 residues long: Thiamine kinase (274 aa).

This sequence belongs to the thiamine kinase family.

It catalyses the reaction thiamine + ATP = thiamine phosphate + ADP + H(+). Its pathway is cofactor biosynthesis; thiamine diphosphate biosynthesis; thiamine phosphate from thiamine: step 1/1. In terms of biological role, catalyzes the ATP-dependent phosphorylation of thiamine to thiamine phosphate. Is involved in thiamine salvage. The sequence is that of Thiamine kinase from Shigella flexneri serotype 5b (strain 8401).